The sequence spans 989 residues: ATP-dependent 6-phosphofructokinase subunit alpha (989 aa).

Positions 1–585 (MPEPSISALS…SYESFLSVSK (585 aa)) are N-terminal catalytic PFK domain 1. ATP contacts are provided by residues glycine 220, 283 to 284 (RS), and 313 to 316 (GDGS). Aspartate 314 is a Mg(2+) binding site. Beta-D-fructose 6-phosphate contacts are provided by residues 359–361 (SID), arginine 396, 403–405 (MGR), glutamate 460, arginine 487, and 493–496 (HVQR). Catalysis depends on aspartate 361, which acts as the Proton acceptor. The interval 586–599 (YDDGSYLVPESSRL) is interdomain linker. Residues 600–989 (NIAIIHVGAP…LSGRLSIRTT (390 aa)) are C-terminal regulatory PFK domain 2. Residues arginine 670, 727-731 (TVSNN), arginine 765, 772-774 (QGG), glutamate 832, arginine 858, 864-867 (HVQQ), and arginine 963 contribute to the beta-D-fructose 2,6-bisphosphate site.

It belongs to the phosphofructokinase type A (PFKA) family. ATP-dependent PFK group I subfamily. Eukaryotic two domain clade 'E' sub-subfamily. As to quaternary structure, heterododecamer of 4 alpha, 4 beta and 4 gamma chains. The gamma chain bridges the N-terminal halves of the alpha and beta subunits. The cofactor is Mg(2+).

The protein resides in the cytoplasm. The catalysed reaction is beta-D-fructose 6-phosphate + ATP = beta-D-fructose 1,6-bisphosphate + ADP + H(+). It functions in the pathway carbohydrate degradation; glycolysis; D-glyceraldehyde 3-phosphate and glycerone phosphate from D-glucose: step 3/4. Allosterically activated by ADP, AMP, or fructose 2,6-bisphosphate, and allosterically inhibited by ATP or citrate. Functionally, catalyzes the phosphorylation of D-fructose 6-phosphate to fructose 1,6-bisphosphate by ATP, the first committing step of glycolysis. Involved in the modulation of glucose-induced microautophagy of peroxisomes independent of its ability to metabolize glucose intermediates. This is ATP-dependent 6-phosphofructokinase subunit alpha (PFK1) from Komagataella phaffii (strain GS115 / ATCC 20864) (Yeast).